Consider the following 842-residue polypeptide: Protein P (842 aa).

The tract at residues 1–177 (MPLSYQHFRR…FCGSPYTWEQ (177 aa)) is terminal protein domain (TP). A spacer region spans residues 178–345 (DLQHGAFLDG…YCLSHLVNLL (168 aa)). The interval 184–238 (FLDGPSRVGKEPFHQQSSRIPSRSPVGPSIQSKYQQSRLGLQSQKGPLARGQQGR) is disordered. Residues 212–228 (SIQSKYQQSRLGLQSQK) are compositionally biased toward polar residues. Residues 346-689 (QDWGPCTEHG…YMNLYPVARQ (344 aa)) form a polymerase/reverse transcriptase domain (RT) region. The Reverse transcriptase domain maps to 356 to 599 (EYHIRIPRTP…YSLNFMGYVI (244 aa)). Mg(2+)-binding residues include Asp428, Asp550, and Asp551.

It belongs to the hepadnaviridae P protein family.

The catalysed reaction is DNA(n) + a 2'-deoxyribonucleoside 5'-triphosphate = DNA(n+1) + diphosphate. The enzyme catalyses Endonucleolytic cleavage to 5'-phosphomonoester.. With respect to regulation, activated by host HSP70 and HSP40 in vitro to be able to bind the epsilon loop of the pgRNA. Because deletion of the RNase H region renders the protein partly chaperone-independent, the chaperones may be needed indirectly to relieve occlusion of the RNA-binding site by this domain. Inhibited by several reverse-transcriptase inhibitors: Lamivudine, Adefovir and Entecavir. Functionally, multifunctional enzyme that converts the viral RNA genome into dsDNA in viral cytoplasmic capsids. This enzyme displays a DNA polymerase activity that can copy either DNA or RNA templates, and a ribonuclease H (RNase H) activity that cleaves the RNA strand of RNA-DNA heteroduplexes in a partially processive 3'- to 5'-endonucleasic mode. Neo-synthesized pregenomic RNA (pgRNA) are encapsidated together with the P protein, and reverse-transcribed inside the nucleocapsid. Initiation of reverse-transcription occurs first by binding the epsilon loop on the pgRNA genome, and is initiated by protein priming, thereby the 5'-end of (-)DNA is covalently linked to P protein. Partial (+)DNA is synthesized from the (-)DNA template and generates the relaxed circular DNA (RC-DNA) genome. After budding and infection, the RC-DNA migrates in the nucleus, and is converted into a plasmid-like covalently closed circular DNA (cccDNA). The activity of P protein does not seem to be necessary for cccDNA generation, and is presumably released from (+)DNA by host nuclear DNA repair machinery. The chain is Protein P from Hepatitis B virus genotype G (isolate United States/USG17/2002) (HBV-G).